We begin with the raw amino-acid sequence, 50 residues long: Sperm protamine P1 (50 aa).

Intrachain disulfides connect C7/C15 and C39/C47.

Belongs to the protamine P1 family. As to quaternary structure, cross-linked by interchain disulfide bonds around the DNA-helix. Testis.

It localises to the nucleus. It is found in the chromosome. Its function is as follows. Protamines substitute for histones in the chromatin of sperm during the haploid phase of spermatogenesis. They compact sperm DNA into a highly condensed, stable and inactive complex. The sequence is that of Sperm protamine P1 (PRM1) from Sus scrofa (Pig).